Reading from the N-terminus, the 41-residue chain is Large ribosomal subunit protein bL36 (41 aa).

This sequence belongs to the bacterial ribosomal protein bL36 family.

The chain is Large ribosomal subunit protein bL36 from Rhodopseudomonas palustris (strain HaA2).